Consider the following 115-residue polypeptide: Large ribosomal subunit protein bL19 (115 aa).

Belongs to the bacterial ribosomal protein bL19 family.

In terms of biological role, this protein is located at the 30S-50S ribosomal subunit interface and may play a role in the structure and function of the aminoacyl-tRNA binding site. In Caldanaerobacter subterraneus subsp. tengcongensis (strain DSM 15242 / JCM 11007 / NBRC 100824 / MB4) (Thermoanaerobacter tengcongensis), this protein is Large ribosomal subunit protein bL19.